The sequence spans 362 residues: 5-amino-6-(D-ribitylamino)uracil--L-tyrosine 4-hydroxyphenyl transferase (362 aa).

Residues 48–294 (ITYVVNRNIN…GDTIKNIQVS (247 aa)) form the Radical SAM core domain. [4Fe-4S] cluster is bound by residues C62, C66, and C69.

The protein belongs to the radical SAM superfamily. CofH family. As to quaternary structure, consists of two subunits, CofG and CofH. The cofactor is [4Fe-4S] cluster.

The catalysed reaction is 5-amino-6-(D-ribitylamino)uracil + L-tyrosine + S-adenosyl-L-methionine = 5-amino-5-(4-hydroxybenzyl)-6-(D-ribitylimino)-5,6-dihydrouracil + 2-iminoacetate + 5'-deoxyadenosine + L-methionine + H(+). It participates in cofactor biosynthesis; coenzyme F0 biosynthesis. Catalyzes the radical-mediated synthesis of 5-amino-5-(4-hydroxybenzyl)-6-(D-ribitylimino)-5,6-dihydrouracil from 5-amino-6-(D-ribitylamino)uracil and L-tyrosine. The chain is 5-amino-6-(D-ribitylamino)uracil--L-tyrosine 4-hydroxyphenyl transferase from Methanococcus aeolicus (strain ATCC BAA-1280 / DSM 17508 / OCM 812 / Nankai-3).